The primary structure comprises 322 residues: ATP-dependent 6-phosphofructokinase (322 aa).

Position 11 (Gly11) interacts with ATP. Position 21–25 (21–25 (RAVVR)) interacts with ADP. Residues 72–73 (RC) and 102–105 (GDGS) contribute to the ATP site. Asp103 lines the Mg(2+) pocket. 127-129 (TID) lines the substrate pocket. Catalysis depends on Asp129, which acts as the Proton acceptor. Residue Arg156 participates in ADP binding. Substrate contacts are provided by residues Arg164 and 171 to 173 (MGR). ADP is bound by residues 187–189 (GAE), Arg213, and 215–217 (KKH). Substrate-binding positions include Glu224, Arg245, and 251-254 (HVQR).

Belongs to the phosphofructokinase type A (PFKA) family. ATP-dependent PFK group I subfamily. Prokaryotic clade 'B1' sub-subfamily. Homotetramer. Mg(2+) is required as a cofactor.

It is found in the cytoplasm. It carries out the reaction beta-D-fructose 6-phosphate + ATP = beta-D-fructose 1,6-bisphosphate + ADP + H(+). It functions in the pathway carbohydrate degradation; glycolysis; D-glyceraldehyde 3-phosphate and glycerone phosphate from D-glucose: step 3/4. Allosterically activated by ADP and other diphosphonucleosides, and allosterically inhibited by phosphoenolpyruvate. Catalyzes the phosphorylation of D-fructose 6-phosphate to fructose 1,6-bisphosphate by ATP, the first committing step of glycolysis. The sequence is that of ATP-dependent 6-phosphofructokinase from Staphylococcus aureus (strain MRSA252).